The chain runs to 173 residues: dCTP deaminase, dUMP-forming (173 aa).

DCTP contacts are provided by residues 93–98 (RSSTGR), Asp-111, 119–121 (TLE), Gln-138, and Tyr-151. Catalysis depends on Glu-121, which acts as the Proton donor/acceptor.

It belongs to the dCTP deaminase family. In terms of assembly, homotrimer.

It catalyses the reaction dCTP + 2 H2O = dUMP + NH4(+) + diphosphate. The protein operates within pyrimidine metabolism; dUMP biosynthesis; dUMP from dCTP: step 1/1. Functionally, bifunctional enzyme that catalyzes both the deamination of dCTP to dUTP and the hydrolysis of dUTP to dUMP without releasing the toxic dUTP intermediate. This chain is dCTP deaminase, dUMP-forming, found in Clostridium botulinum (strain Alaska E43 / Type E3).